Consider the following 443-residue polypeptide: Zinc finger protein ZIC 1 (443 aa).

The segment at 221 to 256 (LICKWIEPEQLANPKKSCNKTFSTMHELVTHVTVEH) adopts a C2H2-type 1; atypical zinc-finger fold. The C2H2-type 2; atypical zinc-finger motif lies at 265–292 (HICVWEECPREGKPFKAKYKLINHIRVH). C2H2-type zinc fingers lie at residues 298-322 (FPCP…KRTH), 328-352 (FKCE…MHVH), and 358-380 (YLCK…MKVH). The tract at residues 371 to 433 (SSLRKHMKVH…AVHHTSNHST (63 aa)) is disordered. The span at 383 to 396 (SSQGSQPSPAASSG) shows a compositional bias: low complexity. Polar residues predominate over residues 397–413 (YESSTPPTIVSPSAENQ). Residues 408–443 (PSAENQSTSSLSPSSSAVHHTSNHSTLSSNFNEWYV) are negatively regulates transcriptional activity. The span at 414–433 (STSSLSPSSSAVHHTSNHST) shows a compositional bias: low complexity.

Belongs to the GLI C2H2-type zinc-finger protein family. In terms of tissue distribution, during early gastrula stages, widely expressed in the dorsal ectoderm. At mid-gastrula, expressed throughout the presumptive neural plate and at late gastrula, expression gradually diminishes in the dorsal midline and increases in the anterior folds. By early neurula stage, expression becomes restricted to the lateral edges of the neural plate, corresponding to the presumptive dorsal neural plate and neural crest, and in flanking ectoderm. In early tailbud stages (stages 22-23), expressed in the dorsal forebrain, midbrain and hindbrain. Subsequently expressed in the telencephalon and at the diencephalon/mesencephalon boundary. In the spinal cord, expression is restricted to the dorsal most region including the roof plate. Also expressed in the somites but not in eye vesicles. At larval stages, expressed mainly in the dorsal neural tube throughout its anteroposterior axis.

It is found in the nucleus. It localises to the cytoplasm. In terms of biological role, transcriptional activator that induces expression of multiple genes including pax3, en2, snai2/slug, feb and a subset of wnt genes. Has multiple key roles in the regulation of neural induction and neurogenesis: acts as a neural competence factor, sensitizing the presumptive neuroectoderm to respond to subsequent neuralizing signals. Promotes both preplacodal cell fates and neural crest cell fates, two of the cell populations that arise from the neural plate border. Cooperates with pax3 in concert with wnt signaling to determine neural crest fate. Synergizes with the bmp-inhibitor noggin/nog and acts through the wnt pathway to induce expression of en2. May bind to the minimal GLI-consensus sequence 5'-TGGGTGGTC-3'. This is Zinc finger protein ZIC 1 (zic1) from Xenopus laevis (African clawed frog).